The following is a 112-amino-acid chain: RRNRRVLFSQAQVYELERRFKQQKYLSAPEREHLASMIHLTPTQVKIWFQNHRYKMKRQAKDKAAQQQLQQDSGGGGGGGGAGCPQQQQAQQQSPRRVAVPVLVKDGKPCPA.

The segment at residues 1 to 60 is a DNA-binding region (homeobox); that stretch reads RRNRRVLFSQAQVYELERRFKQQKYLSAPEREHLASMIHLTPTQVKIWFQNHRYKMKRQA. The tract at residues 59–100 is disordered; it reads QAKDKAAQQQLQQDSGGGGGGGGAGCPQQQQAQQQSPRRVAV. Gly residues predominate over residues 73 to 83; that stretch reads SGGGGGGGGAG. Positions 84 to 93 are enriched in low complexity; sequence CPQQQQAQQQ.

Belongs to the NK-2 homeobox family. Post-translationally, phosphorylated on serine residues.

The protein localises to the nucleus. Transcription factor that binds and activates the promoter of thyroid specific genes such as thyroglobulin, thyroperoxidase, and thyrotropin receptor. Crucial in the maintenance of the thyroid differentiation phenotype. May play a role in lung development and surfactant homeostasis. This Cavia porcellus (Guinea pig) protein is Thyroid transcription factor 1 (TITF1).